Here is a 25-residue protein sequence, read N- to C-terminus: Ribosome-inactivating protein charantin (25 aa).

In terms of assembly, monomer.

It catalyses the reaction Endohydrolysis of the N-glycosidic bond at one specific adenosine on the 28S rRNA.. Functionally, inhibits cell-free translation in a rabbit reticulocyte lysate system. The chain is Ribosome-inactivating protein charantin from Momordica charantia (Bitter gourd).